A 520-amino-acid chain; its full sequence is Cilia- and flagella-associated protein 157 (520 aa).

The interval 1–22 is disordered; that stretch reads MAPKKSVSKAGKELEVKKKGGK. The segment covering 10-22 has biased composition (basic and acidic residues); sequence AGKELEVKKKGGK. 2 coiled-coil regions span residues 33–189 and 236–372; these read LAKE…LEKK and LQMA…QATS. Positions 416-453 are disordered; the sequence is PQKAACPHQESQSHGPPKESRPSIQLPRTGSLLPQLSD. The segment covering 437–453 has biased composition (polar residues); that stretch reads PSIQLPRTGSLLPQLSD.

Belongs to the CFAP157 family. As to quaternary structure, interacts with TUBB and TUBA4A. Interacts with CEP350.

The protein localises to the cytoplasm. Its subcellular location is the cytoskeleton. It is found in the cilium basal body. Its function is as follows. Specifically required during spermatogenesis for flagellum morphogenesis and sperm motility. May be required to suppress the formation of supernumerary axonemes and ensure a correct ultrastructure. The sequence is that of Cilia- and flagella-associated protein 157 from Homo sapiens (Human).